A 671-amino-acid polypeptide reads, in one-letter code: NADH-quinone oxidoreductase subunit G (671 aa).

In terms of domain architecture, 2Fe-2S ferredoxin-type spans 1-78 (MIKLNVDGSE…GMVIHTDTPM (78 aa)). [2Fe-2S] cluster contacts are provided by Cys34, Cys45, Cys48, and Cys62. The 4Fe-4S His(Cys)3-ligated-type domain maps to 78–117 (MVKKAREGVMEFLLINHPLDCPICDQGGECNLQDQAFRYG). The [4Fe-4S] cluster site is built by His94, Cys98, Cys101, Cys107, Cys146, Cys149, Cys152, and Cys196. Residues 215 to 271 (LKHTASIGVHDAEGSNIRIDSRGDEVMRILPRVNEEINEEWLSDKNRFSYDGLKYQR) enclose the 4Fe-4S Mo/W bis-MGD-type domain.

Belongs to the complex I 75 kDa subunit family. Requires [2Fe-2S] cluster as cofactor. [4Fe-4S] cluster serves as cofactor.

The catalysed reaction is a quinone + NADH + 5 H(+)(in) = a quinol + NAD(+) + 4 H(+)(out). Functionally, NDH-1 shuttles electrons from NADH, via FMN and iron-sulfur (Fe-S) centers, to quinones in the respiratory chain. Couples the redox reaction to proton translocation (for every two electrons transferred, four hydrogen ions are translocated across the cytoplasmic membrane), and thus conserves the redox energy in a proton gradient. The sequence is that of NADH-quinone oxidoreductase subunit G (nuoG) from Rickettsia conorii (strain ATCC VR-613 / Malish 7).